A 387-amino-acid chain; its full sequence is 3-ketoacyl-CoA thiolase (387 aa).

The Acyl-thioester intermediate role is filled by Cys91. Catalysis depends on proton acceptor residues His343 and Cys373.

Belongs to the thiolase-like superfamily. Thiolase family. As to quaternary structure, heterotetramer of two alpha chains (FadB) and two beta chains (FadA).

It is found in the cytoplasm. It carries out the reaction an acyl-CoA + acetyl-CoA = a 3-oxoacyl-CoA + CoA. It functions in the pathway lipid metabolism; fatty acid beta-oxidation. Functionally, catalyzes the final step of fatty acid oxidation in which acetyl-CoA is released and the CoA ester of a fatty acid two carbons shorter is formed. The protein is 3-ketoacyl-CoA thiolase of Erwinia tasmaniensis (strain DSM 17950 / CFBP 7177 / CIP 109463 / NCPPB 4357 / Et1/99).